The chain runs to 483 residues: Regulatory protein ViaA (483 aa).

Belongs to the ViaA family. Homodimer. Interacts with RavA.

The protein localises to the cytoplasm. Functionally, component of the RavA-ViaA chaperone complex, which may act on the membrane to optimize the function of some of the respiratory chains. ViaA stimulates the ATPase activity of RavA. This chain is Regulatory protein ViaA, found in Shigella flexneri.